Here is a 312-residue protein sequence, read N- to C-terminus: Gamma-soluble NSF attachment protein (312 aa).

A disordered region spans residues 281–312 (KKKSPATPQAKPDGVTATAADEEEDEYSGGLC). Phosphoserine is present on Ser-284. A Phosphothreonine modification is found at Thr-287. Over residues 300-312 (ADEEEDEYSGGLC) the composition is skewed to acidic residues. Ser-308 carries the post-translational modification Phosphoserine.

The protein belongs to the SNAP family. Interacts with RAB11FIP5. Interacts with VTI1A.

The protein resides in the membrane. The protein localises to the golgi apparatus. In terms of biological role, required for vesicular transport between the endoplasmic reticulum and the Golgi apparatus. The sequence is that of Gamma-soluble NSF attachment protein from Homo sapiens (Human).